Consider the following 703-residue polypeptide: Polyribonucleotide nucleotidyltransferase (703 aa).

Positions 486 and 492 each coordinate Mg(2+). In terms of domain architecture, KH spans 553–612; the sequence is PKIEIIHINPDKIRDVIGPGGKKINEIIDATGVKLDIEQDGTVFIGSSDASMIEAAKKLI. Positions 622-690 constitute an S1 motif domain; it reads GQIYMATVKR…KQGRVNASRK (69 aa).

The protein belongs to the polyribonucleotide nucleotidyltransferase family. The cofactor is Mg(2+).

It localises to the cytoplasm. The enzyme catalyses RNA(n+1) + phosphate = RNA(n) + a ribonucleoside 5'-diphosphate. Functionally, involved in mRNA degradation. Catalyzes the phosphorolysis of single-stranded polyribonucleotides processively in the 3'- to 5'-direction. The sequence is that of Polyribonucleotide nucleotidyltransferase from Macrococcus caseolyticus (strain JCSC5402) (Macrococcoides caseolyticum).